Reading from the N-terminus, the 560-residue chain is NAD-dependent malic enzyme (560 aa).

Y100 acts as the Proton donor in catalysis. R153 is a binding site for NAD(+). Catalysis depends on K171, which acts as the Proton acceptor. 3 residues coordinate a divalent metal cation: E242, D243, and D266. NAD(+) contacts are provided by D266 and N413.

It belongs to the malic enzymes family. Homotetramer. Requires Mg(2+) as cofactor. Mn(2+) is required as a cofactor.

The catalysed reaction is (S)-malate + NAD(+) = pyruvate + CO2 + NADH. The enzyme catalyses oxaloacetate + H(+) = pyruvate + CO2. The protein is NAD-dependent malic enzyme of Psychrobacter arcticus (strain DSM 17307 / VKM B-2377 / 273-4).